The primary structure comprises 573 residues: Exonuclease V, mitochondrial (573 aa).

[4Fe-4S] cluster contacts are provided by cysteine 90, cysteine 538, cysteine 541, and cysteine 547.

Belongs to the EXO5 family. As to quaternary structure, monomer. The cofactor is Mg(2+). [4Fe-4S] cluster serves as cofactor.

The protein resides in the mitochondrion. Its function is as follows. Single strand DNA specific 5' exonuclease involved in mitochondrial DNA replication and recombination. Releases dinucleotides as main products of catalysis. Has the capacity to slide across 5'double-stranded DNA or 5'RNA sequences and resumes cutting two nucleotides downstream of the double-stranded-to-single-stranded junction or RNA-to-DNA junction, respectively. This Scheffersomyces stipitis (strain ATCC 58785 / CBS 6054 / NBRC 10063 / NRRL Y-11545) (Yeast) protein is Exonuclease V, mitochondrial (EXO5).